Reading from the N-terminus, the 378-residue chain is Anhydro-N-acetylmuramic acid kinase (378 aa).

G9–D16 is a binding site for ATP.

It belongs to the anhydro-N-acetylmuramic acid kinase family.

It catalyses the reaction 1,6-anhydro-N-acetyl-beta-muramate + ATP + H2O = N-acetyl-D-muramate 6-phosphate + ADP + H(+). It participates in amino-sugar metabolism; 1,6-anhydro-N-acetylmuramate degradation. The protein operates within cell wall biogenesis; peptidoglycan recycling. In terms of biological role, catalyzes the specific phosphorylation of 1,6-anhydro-N-acetylmuramic acid (anhMurNAc) with the simultaneous cleavage of the 1,6-anhydro ring, generating MurNAc-6-P. Is required for the utilization of anhMurNAc either imported from the medium or derived from its own cell wall murein, and thus plays a role in cell wall recycling. This is Anhydro-N-acetylmuramic acid kinase from Synechococcus elongatus (strain ATCC 33912 / PCC 7942 / FACHB-805) (Anacystis nidulans R2).